Reading from the N-terminus, the 1136-residue chain is Myosin-binding protein C, fast-type (1136 aa).

2 disordered regions span residues 1 to 55 (MPEA…KKPD) and 151 to 177 (APRQDSSGQSLESFKRSGDGKSEDAGE). Positions 13–35 (KGKDAPKEAPAKQTPEEPPKEAP) are enriched in basic and acidic residues. In terms of domain architecture, Ig-like C2-type 1 spans 46-149 (PTGIFLKKPD…CDSCSFNVDV (104 aa)). Over residues 163–174 (SFKRSGDGKSED) the composition is skewed to basic and acidic residues. Ig-like C2-type domains follow at residues 250-339 (SAAF…VKEP), 340-432 (PVLI…VEEK), 433-533 (QLEV…KQEP), and 534-633 (PKIH…VVDV). Fibronectin type-III domains lie at 636–732 (PPEA…IAPT) and 734–829 (APQH…IREI). One can recognise an Ig-like C2-type 6 domain in the interval 833 to 927 (PKIRLPRHLR…ATIRIRVVEK (95 aa)). The Fibronectin type-III 3 domain maps to 930-1025 (PAENVMVKEV…SKNTARILKT (96 aa)). One can recognise an Ig-like C2-type 7 domain in the interval 1043–1136 (PKFLTPLMDR…ECKLDVRVPQ (94 aa)).

Belongs to the immunoglobulin superfamily. MyBP family.

Functionally, thick filament-associated protein located in the crossbridge region of vertebrate striated muscle a bands. In vitro it binds MHC, F-actin and native thin filaments, and modifies the activity of actin-activated myosin ATPase. It may modulate muscle contraction or may play a more structural role. The sequence is that of Myosin-binding protein C, fast-type (Mybpc2) from Mus musculus (Mouse).